The chain runs to 201 residues: Imidazoleglycerol-phosphate dehydratase (201 aa).

Belongs to the imidazoleglycerol-phosphate dehydratase family.

It localises to the cytoplasm. It catalyses the reaction D-erythro-1-(imidazol-4-yl)glycerol 3-phosphate = 3-(imidazol-4-yl)-2-oxopropyl phosphate + H2O. It participates in amino-acid biosynthesis; L-histidine biosynthesis; L-histidine from 5-phospho-alpha-D-ribose 1-diphosphate: step 6/9. This Prochlorococcus marinus (strain AS9601) protein is Imidazoleglycerol-phosphate dehydratase.